The sequence spans 345 residues: MPSQSLTIRLPKFEETFSVFPDNGLNPHYANSRAESRAWINQYHHAVCGPNMRTFMDKCNFELAGALFYPYANEAGLRATMDLVNLLWLYDELTDTKTETEAVNAAHIVACALREPDFDDGTWICSMIKDFNQRHISKAGPNTAYRFIYNFCNYVEAVGTEAGLRAKNEILDITTYISFRRETSALRLTFDLVQYCLGIDLPQYVHDDPVFASGYNAAMDLVCWTNDLFSYNREQAKGHAGANVVTVIMKSKGVDIQSAVDFVGGYCEALTSQLVEARRILLSRSHRVYSKDAVRILEAFGDFVRGNDQWSFASERYFGQKNKVVKESRIVEIITPFSDLIAINE.

Residues Asp-91, Asn-226, Ser-230, and Glu-234 each coordinate Mg(2+). The DDXXD motif motif lies at 91 to 95; sequence DELTD. Residues Arg-316 and Tyr-317 each contribute to the (2E,6E)-farnesyl diphosphate site.

It belongs to the terpene synthase family. The cofactor is Mg(2+).

The enzyme catalyses (2E,6E)-farnesyl diphosphate = viridiflorene + diphosphate. Its function is as follows. Terpene cyclase that catalyzes the cyclization of farnesyl diphosphate (FPP) to various sesquiterpenes, including beta-elemene, viridiflorene and gamma-cadinene. Gamma-cadinene is the major product of PILCRDRAFT_825684. This is Sesquiterpene synthase PILCRDRAFT_825684 from Piloderma croceum (strain F 1598).